The following is a 155-amino-acid chain: UPF0735 ACT domain-containing protein CA_C1234 (155 aa).

In terms of domain architecture, ACT spans threonine 79–methionine 154.

Belongs to the UPF0735 family.

The sequence is that of UPF0735 ACT domain-containing protein CA_C1234 from Clostridium acetobutylicum (strain ATCC 824 / DSM 792 / JCM 1419 / IAM 19013 / LMG 5710 / NBRC 13948 / NRRL B-527 / VKM B-1787 / 2291 / W).